Consider the following 536-residue polypeptide: CTP synthase (536 aa).

The tract at residues 1–267 (MSKFVFVTGG…CKETLNYLEL (267 aa)) is amidoligase domain. Ser-13 is a binding site for CTP. Residue Ser-13 participates in UTP binding. ATP contacts are provided by residues 14 to 19 (SIGKGI) and Asp-71. Positions 71 and 141 each coordinate Mg(2+). Residues 148–150 (DIE), 188–193 (KTKPTQ), and Lys-224 contribute to the CTP site. UTP contacts are provided by residues 188-193 (KTKPTQ) and Lys-224. The Glutamine amidotransferase type-1 domain maps to 292–534 (KVALVGKYIE…IKASQDKLTQ (243 aa)). Residue Gly-354 participates in L-glutamine binding. Cys-381 functions as the Nucleophile; for glutamine hydrolysis in the catalytic mechanism. L-glutamine-binding positions include 382–385 (LGMQ), Glu-405, and Arg-462. Active-site residues include His-507 and Glu-509.

Belongs to the CTP synthase family. As to quaternary structure, homotetramer.

The catalysed reaction is UTP + L-glutamine + ATP + H2O = CTP + L-glutamate + ADP + phosphate + 2 H(+). The enzyme catalyses L-glutamine + H2O = L-glutamate + NH4(+). It catalyses the reaction UTP + NH4(+) + ATP = CTP + ADP + phosphate + 2 H(+). The protein operates within pyrimidine metabolism; CTP biosynthesis via de novo pathway; CTP from UDP: step 2/2. Allosterically activated by GTP, when glutamine is the substrate; GTP has no effect on the reaction when ammonia is the substrate. The allosteric effector GTP functions by stabilizing the protein conformation that binds the tetrahedral intermediate(s) formed during glutamine hydrolysis. Inhibited by the product CTP, via allosteric rather than competitive inhibition. Its function is as follows. Catalyzes the ATP-dependent amination of UTP to CTP with either L-glutamine or ammonia as the source of nitrogen. Regulates intracellular CTP levels through interactions with the four ribonucleotide triphosphates. In Prochlorococcus marinus (strain MIT 9301), this protein is CTP synthase.